A 1212-amino-acid chain; its full sequence is Periplasmic/secreted acid trehalase ATH1 (1212 aa).

At M1 to N82 the chain is on the cytoplasmic side. The helical transmembrane segment at I83 to L103 threads the bilayer. The Periplasmic portion of the chain corresponds to S104–E1212. Residues N243, N275, N296, N362, N414, N428, and N521 are each glycosylated (N-linked (GlcNAc...) asparagine). W546–D547 serves as a coordination point for substrate. Residues N572, N601, N661, and N671 are each glycosylated (N-linked (GlcNAc...) asparagine). The active-site Proton donor is E677. N-linked (GlcNAc...) asparagine glycosylation is found at N729 and N738. Residue K744–Q745 participates in substrate binding. N-linked (GlcNAc...) asparagine glycans are attached at residues N912, N938, N993, N1011, N1033, N1052, N1070, N1097, and N1165.

It belongs to the glycosyl hydrolase 65 family. As to quaternary structure, homodimer.

It localises to the secreted. The protein localises to the periplasm. It is found in the membrane. It catalyses the reaction alpha,alpha-trehalose + H2O = alpha-D-glucose + beta-D-glucose. Its function is as follows. Periplasmic/secreted acid trehalase that catalyzes hydrolysis of the disaccharide trehalose and required for growth on trehalose as carbon source. Growth on trehalose is not restricted to respiration. This Candida glabrata (Yeast) protein is Periplasmic/secreted acid trehalase ATH1.